A 43-amino-acid polypeptide reads, in one-letter code: Protein PsbN (43 aa).

Residues 7-29 traverse the membrane as a helical segment; that stretch reads IVIFVSSLLLGITTYSVYTAFGP.

This sequence belongs to the PsbN family.

The protein resides in the plastid. The protein localises to the chloroplast thylakoid membrane. In terms of biological role, may play a role in photosystem I and II biogenesis. This Phaeodactylum tricornutum (strain CCAP 1055/1) protein is Protein PsbN.